A 106-amino-acid chain; its full sequence is MTKIIAVTACPSGVAHTYMAAEALESAAKAKGWEVKVETQGSIGLENELTAEDVASADMVILTKDIGIKFEERFAGKTIVRVNISDAVKRADAIMSKIEAHLAQTA.

Positions methionine 1 to alanine 103 constitute a PTS EIIB type-2 domain. Cysteine 10 serves as the catalytic Phosphocysteine intermediate. Cysteine 10 is subject to Phosphocysteine; by EIIA.

Its subcellular location is the cytoplasm. It carries out the reaction D-fructose(out) + N(pros)-phospho-L-histidyl-[protein] = D-fructose 1-phosphate(in) + L-histidyl-[protein]. Its function is as follows. The phosphoenolpyruvate-dependent sugar phosphotransferase system (sugar PTS), a major carbohydrate active transport system, catalyzes the phosphorylation of incoming sugar substrates concomitantly with their translocation across the cell membrane. The enzyme II FrwABC PTS system is involved in fructose transport. In Escherichia coli O157:H7, this protein is PTS system fructose-like EIIB component 2 (frwB).